Reading from the N-terminus, the 179-residue chain is MSSRVLTPDVVGIDALIHDHQTVLAKAEGGVVAVFANNAPAFYAVTPARLAELLALEEKLARPGSDVALDDQLYQEPQAAPVAVPMGKFAMYPDWQPDTDFIRQAALWGVALREPVTAEELASFIAYWQAEGKVFHHVQWQQKLARSLQIGRASNGGLPKRDVNTVSEPDSQIPPGFRG.

Residues 154-179 (SNGGLPKRDVNTVSEPDSQIPPGFRG) are disordered.

This sequence belongs to the DnaT family. Homooligomerizes. Interacts with PriB. Component of the replication restart primosome. Primosome assembly occurs via a 'hand-off' mechanism. PriA binds to replication forks, subsequently PriB then DnaT bind; DnaT then displaces ssDNA to generate the helicase loading substrate.

Functionally, involved in the restart of stalled replication forks, which reloads the replicative helicase on sites other than the origin of replication. Can function in multiple replication restart pathways. Displaces ssDNA from a PriB-ssDNA complex. Probably forms a spiral filament on ssDNA. This Escherichia coli O127:H6 (strain E2348/69 / EPEC) protein is Replication restart protein DnaT.